Here is a 252-residue protein sequence, read N- to C-terminus: Cell division protein ZapD (252 aa).

The protein belongs to the ZapD family. Interacts with FtsZ.

The protein localises to the cytoplasm. Functionally, cell division factor that enhances FtsZ-ring assembly. Directly interacts with FtsZ and promotes bundling of FtsZ protofilaments, with a reduction in FtsZ GTPase activity. This is Cell division protein ZapD from Ralstonia nicotianae (strain ATCC BAA-1114 / GMI1000) (Ralstonia solanacearum).